Consider the following 245-residue polypeptide: tRNA (guanine-N(7)-)-methyltransferase (245 aa).

S-adenosyl-L-methionine contacts are provided by glutamate 71, glutamate 96, aspartate 123, and aspartate 146. Aspartate 146 is a catalytic residue. Lysine 150 contacts substrate. An interaction with RNA region spans residues 152 to 157 (KHNKRR). Substrate contacts are provided by residues aspartate 182 and 224–227 (TKFE).

It belongs to the class I-like SAM-binding methyltransferase superfamily. TrmB family.

The catalysed reaction is guanosine(46) in tRNA + S-adenosyl-L-methionine = N(7)-methylguanosine(46) in tRNA + S-adenosyl-L-homocysteine. It functions in the pathway tRNA modification; N(7)-methylguanine-tRNA biosynthesis. In terms of biological role, catalyzes the formation of N(7)-methylguanine at position 46 (m7G46) in tRNA. The polypeptide is tRNA (guanine-N(7)-)-methyltransferase (Albidiferax ferrireducens (strain ATCC BAA-621 / DSM 15236 / T118) (Rhodoferax ferrireducens)).